A 296-amino-acid polypeptide reads, in one-letter code: Nucleotide-binding protein SZO_12220 (296 aa).

13–20 (GMSGAGKT) is a binding site for ATP. GTP is bound at residue 63-66 (DMRS).

The protein belongs to the RapZ-like family.

In terms of biological role, displays ATPase and GTPase activities. The polypeptide is Nucleotide-binding protein SZO_12220 (Streptococcus equi subsp. zooepidemicus (strain H70)).